The sequence spans 2049 residues: Polyunsaturated fatty acid synthase subunit B (2049 aa).

2 Ketosynthase family 3 (KS3) domains span residues 15-442 (EKRI…VFEE) and 468-908 (NMRI…LLSD). Active-site for beta-ketoacyl synthase 1 activity residues include cysteine 196, histidine 333, and histidine 368. The segment at 467 to 984 (NNMRIAITGM…LGETLAQEAD (518 aa)) is chain length factor (CLF) domain. The interval 1044–1377 (RVAFMYGEGR…QRSHVTGAMD (334 aa)) is acyltransferase (AT) domain. The disordered stretch occupies residues 1500 to 1531 (NKDNQPAVAPAATAAPTPKPKPAASSGKPVPS). Low complexity predominate over residues 1505–1531 (PAVAPAATAAPTPKPKPAASSGKPVPS). The interval 1579–1887 (SRAFMKTYGV…SRANKLYELF (309 aa)) is enoyl reductase (ER) domain.

In terms of assembly, component of the polyunsaturated fatty acid synthase complex composed of at least ORF-A, ORF-B and ORF-C.

It functions in the pathway lipid metabolism; fatty acid biosynthesis. Poliketide synthase-like protein; part of the polyunsaturated fatty acid synthase composed of the 3 PKS-like subunits A, B and C. While the saturated fatty acids (SFAs) in Thraustochytrium are produced by the conventional fatty acid synthase (FAS) pathway, polyunsaturated fatty acids (PUFAs) including docosahexeanoic acid (DHA) and docosapentaenoic acid (DPA) are synthesized via an anaerobical PKS pathway. PUFA synthase assimilates fatty acyl-CoA, the product of FAS, as the starter unit to synthesize DPA, and this starter unit may be butyryl-CoA, hexanoyl-CoA, or octanoyl-CoA. DPA and DHA biosynthesis seem to differ by the reduction at the N-3 position by PUFA synthase, not the extension of carbon chain. In DHA biosynthesis, PUFA synthase extends the fatty acyl chain from the methyl toward the carboxyl end, and the double bond is formed when the carbon chain is growing, instead of afterward. Therefore, PUFA synthase is unable to transform DPA to DHA, suggesting that DPA is not the precursor of DHA. Moreover, DPA molecule is partly extended by FAS KS domain, so DPA biosynthesis is less dependent on PUFA synthase KS domain than DHA. In Thraustochytrium sp. (strain ATCC 26185 / S-3), this protein is Polyunsaturated fatty acid synthase subunit B.